The following is a 153-amino-acid chain: Ribosome maturation factor RimP (153 aa).

The protein belongs to the RimP family.

The protein resides in the cytoplasm. Its function is as follows. Required for maturation of 30S ribosomal subunits. This Clostridium botulinum (strain Okra / Type B1) protein is Ribosome maturation factor RimP.